The sequence spans 169 residues: uncharacterized protein (169 aa).

This is an uncharacterized protein from Methanocaldococcus jannaschii (strain ATCC 43067 / DSM 2661 / JAL-1 / JCM 10045 / NBRC 100440) (Methanococcus jannaschii).